The primary structure comprises 473 residues: H(+)/Cl(-) exchange transporter ClcA (473 aa).

At 1-32 (MKTDTPSLETPQAARLRRRQLIRQLLERDKTP) the chain is on the cytoplasmic side. The chain crosses the membrane as a helical span at residues 33–69 (LAILFMAAVVGTLVGLAAVAFDKGVAWLQNQRMGALV). Residues 70-76 (HTADNYP) lie on the Periplasmic side of the membrane. A helical membrane pass occupies residues 77–100 (LLLTVAFLCSAVLAMFGYFLVRKY). The short motif at 106–110 (GSGIP) is the Selectivity filter part_1 element. A chloride-binding site is contributed by Ser-107. Residues 109–116 (IPEIEGAL) constitute an intramembrane region (helical). Over 117–123 (EDQRPVR) the chain is Cytoplasmic. 2 helical membrane-spanning segments follow: residues 124 to 141 (WWRV…TLGG) and 148 to 166 (EGPT…LDIF). Positions 146–150 (GREGP) match the Selectivity filter part_2 motif. The Cytoplasmic portion of the chain corresponds to 167–176 (RLKGDEARHT). 2 consecutive intramembrane regions (helical) follow at residues 177-189 (LLAT…LAAA) and 193-201 (PLAGILFII). The Cytoplasmic segment spans residues 202-214 (EEMRPQFRYTLIS). A helical membrane pass occupies residues 215–232 (IKAVFIGVIMSTIMYRIF). At 233-252 (NHEVALIDVGKLSDAPLNTL) the chain is on the periplasmic side. Residues 253 to 281 (WLYLILGIIFGIFGPIFNKWVLGMQDLLH) traverse the membrane as a helical segment. Topologically, residues 282-287 (RVHGGN) are cytoplasmic. Residues 288-309 (ITKWVLMGGAIGGLCGLLGFVA) form a helical membrane-spanning segment. Topologically, residues 310 to 329 (PATSGGGFNLIPIATAGNFS) are periplasmic. Helical transmembrane passes span 330–349 (MGML…LCFS) and 355–376 (GIFA…MVAV). Positions 355–359 (GIFAP) match the Selectivity filter part_3 motif. Chloride is bound by residues Ile-356 and Phe-357. The Periplasmic segment spans residues 377 to 386 (ELFPQYHLEA). The helical intramembrane region spans 387 to 401 (GTFAIAGMGALLAAS). Positions 402 to 404 (IRA) form an intramembrane region, note=Loop between two helices. Positions 405–416 (PLTGIILVLEMT) form an intramembrane region, helical. An intramembrane region (note=Loop between two helices) is located at residues 417–421 (DNYQL). The helical transmembrane segment at 422–438 (ILPMIITGLGATLLAQF) threads the bilayer. Over 439-473 (TGGKPLYSAILARTLAKQEAEQLARSKAASASENT) the chain is Cytoplasmic. Position 445 (Tyr-445) interacts with chloride.

Belongs to the chloride channel (TC 2.A.49) family. ClcA subfamily. Homodimer.

It is found in the cell inner membrane. The catalysed reaction is 2 chloride(in) + H(+)(out) = 2 chloride(out) + H(+)(in). Functionally, proton-coupled chloride transporter. Functions as antiport system and exchanges two chloride ions for 1 proton. Probably acts as an electrical shunt for an outwardly-directed proton pump that is linked to amino acid decarboxylation, as part of the extreme acid resistance (XAR) response. This chain is H(+)/Cl(-) exchange transporter ClcA, found in Escherichia coli O139:H28 (strain E24377A / ETEC).